Reading from the N-terminus, the 396-residue chain is Flap endonuclease 1 (396 aa).

The interval 1 to 104 is N-domain; that stretch reads MGIKHLYQLI…GELAKRFQRK (104 aa). Position 34 (Asp-34) interacts with Mg(2+). Positions 47 and 70 each coordinate DNA. Positions 86, 158, 160, 179, and 181 each coordinate Mg(2+). The interval 122 to 255 is I-domain; the sequence is DVEKFSRRTV…STALKLIRDH (134 aa). Position 158 (Glu-158) interacts with DNA. Residues Gly-233 and Asp-235 each coordinate DNA. Asp-235 serves as a coordination point for Mg(2+). The disordered stretch occupies residues 338 to 396; it reads MKSAQQSRLEGFFKPVERTPEEKASLKRKADEKLSEKKKKQKEEAKAKKQAKSKPRTAG. The interval 342–350 is interaction with PCNA; sequence QQSRLEGFF. Residues 352 to 384 are compositionally biased toward basic and acidic residues; it reads PVERTPEEKASLKRKADEKLSEKKKKQKEEAKA. Positions 385 to 396 are enriched in basic residues; the sequence is KKQAKSKPRTAG.

The protein belongs to the XPG/RAD2 endonuclease family. FEN1 subfamily. In terms of assembly, interacts with PCNA. Three molecules of FEN1 bind to one PCNA trimer with each molecule binding to one PCNA monomer. PCNA stimulates the nuclease activity without altering cleavage specificity. The cofactor is Mg(2+). Post-translationally, phosphorylated. Phosphorylation upon DNA damage induces relocalization to the nuclear plasma.

It localises to the nucleus. Its subcellular location is the nucleolus. The protein localises to the nucleoplasm. The protein resides in the mitochondrion. Its function is as follows. Structure-specific nuclease with 5'-flap endonuclease and 5'-3' exonuclease activities involved in DNA replication and repair. During DNA replication, cleaves the 5'-overhanging flap structure that is generated by displacement synthesis when DNA polymerase encounters the 5'-end of a downstream Okazaki fragment. It enters the flap from the 5'-end and then tracks to cleave the flap base, leaving a nick for ligation. Also involved in the long patch base excision repair (LP-BER) pathway, by cleaving within the apurinic/apyrimidinic (AP) site-terminated flap. Acts as a genome stabilization factor that prevents flaps from equilibrating into structures that lead to duplications and deletions. Also possesses 5'-3' exonuclease activity on nicked or gapped double-stranded DNA, and exhibits RNase H activity. Also involved in replication and repair of rDNA and in repairing mitochondrial DNA. The chain is Flap endonuclease 1 from Phaeosphaeria nodorum (strain SN15 / ATCC MYA-4574 / FGSC 10173) (Glume blotch fungus).